Consider the following 72-residue polypeptide: Kappa-conotoxin PVIIA (72 aa).

An N-terminal signal peptide occupies residues M1–A22. The propeptide occupies D23–R45. 3 disulfide bridges follow: C46–C61, C53–C65, and C60–C71. The residue at position 49 (P49) is a 4-hydroxyproline.

Belongs to the conotoxin O1 superfamily. This toxin is not amidated at the C-terminal Val residue. As to expression, expressed by the venom duct.

Its subcellular location is the secreted. Its function is as follows. Kappa-conotoxins bind and inhibit voltage-gated potassium channels (Kv). This toxin inhibits the drosophila Shaker channel (IC(50)=57-80 nM). In vivo, when tested in fish, this toxin induces hyperactivity, followed by continuous contraction and extension of major fins, without immobilization or death. Injection of this peptide together with the delta-conotoxin PVIA causes the sudden tetanus of prey (STOP) syndrome, which is a single, lethal 'fin-pop' in envenomed fish. When tested in mice, induces hyperactivity. This is Kappa-conotoxin PVIIA from Conus purpurascens (Purple cone).